A 340-amino-acid chain; its full sequence is Erlin-2 (340 aa).

Over M1–Q3 the chain is Cytoplasmic. Residues L4–H24 form a helical membrane-spanning segment. Over K25–N340 the chain is Lumenal. An N-linked (GlcNAc...) asparagine glycan is attached at N106. Positions E177–A309 are interaction with ERLIN1. K267 is modified (N6-acetyllysine).

It belongs to the band 7/mec-2 family. Forms a heteromeric complex with ERLIN1. In complex with ERLIN1, interacts with RNF170. Interacts with activated ITPR1, independently of the degree of ITPR1 polyubiquitination. Interacts with SCAP, INSIG1, SREBF1 and SREBF2 under cholesterol sufficiency conditions; indicative for an association with the SCAP-SREBP-INSIG complex. Probably part of an AMFR/gp78 and INSIG1-containing ubiquitin ligase complex involved in ERAD of HMGCR. Interacts with TMUB1; TMUB1 bridges the association with AMFR. Interacts with SYVN1 and RNF139. Interacts with TMEM259. Interacts with TMEM41B. Post-translationally, deubiquitinated by USP25; leading to stabilization.

It localises to the endoplasmic reticulum membrane. In terms of biological role, component of the ERLIN1/ERLIN2 complex which mediates the endoplasmic reticulum-associated degradation (ERAD) of inositol 1,4,5-trisphosphate receptors (IP3Rs) such as ITPR1. Promotes sterol-accelerated ERAD of HMGCR probably implicating an AMFR/gp78-containing ubiquitin ligase complex. Involved in regulation of cellular cholesterol homeostasis by regulation the SREBP signaling pathway. May promote ER retention of the SCAP-SREBF complex. The sequence is that of Erlin-2 (Erlin2) from Mus musculus (Mouse).